We begin with the raw amino-acid sequence, 51 residues long: uncharacterized protein (51 aa).

Residues 10–29 (LFLYHPLFLLLLYIYLVLFI) traverse the membrane as a helical segment.

The protein resides in the plastid. The protein localises to the chloroplast membrane. This is an uncharacterized protein from Anthoceros angustus (Hornwort).